The primary structure comprises 493 residues: Dipeptidase 3 (493 aa).

Positions 1–35 (MQPAGLEGPRALGLRPLGHRLSLLGVLLLVPSLWV) are cleaved as a signal peptide. Residues 41-60 (TPSPSSAPTTPEASNATTAP) show a composition bias toward low complexity. Positions 41–74 (TPSPSSAPTTPEASNATTAPGIPNDTATSGVTSD) are disordered. Intrachain disulfides connect cysteine 143–cysteine 222 and cysteine 294–cysteine 326. The N-linked (GlcNAc...) asparagine glycan is linked to asparagine 331. Serine 462 carries GPI-anchor amidated serine lipidation. A propeptide spans 463-493 (KAPPHPLPGLMATLTSLALILWLCCSGHRAV) (removed in mature form).

It belongs to the metallo-dependent hydrolases superfamily. Peptidase M19 family. As to quaternary structure, homodimer; disulfide-linked. Interacts with TEX101; co-localized on the cell surface of spermatocytes, spermatids, and testicular spermatozoa, co-localized only in cytoplasmic droplets of caput and corpus epididymal sperm. In terms of tissue distribution, expressed in testis but not ovary.

It is found in the membrane. In terms of biological role, lacks dipeptidase activity and is unable to hydrolyze cystinyl-bis-glycine. The absence of activity may be due to the inability of serine (instead of aspartate found in DPEP1/2) at position 356 to function as the acid/base catalyst and activate the nucleophilic water/hydroxide. Does not hydrolyze leukotriene D4 (LTD4) into leukotriene E4 (LTE4). Does not hydrolyze the beta-lactam antibiotic imipenem. The protein is Dipeptidase 3 (Dpep3) of Mus musculus (Mouse).